A 366-amino-acid polypeptide reads, in one-letter code: DNA-directed RNA polymerase subunit alpha (366 aa).

Residues methionine 1–glutamate 233 form an alpha N-terminal domain (alpha-NTD) region. The tract at residues lysine 264 to glutamate 366 is alpha C-terminal domain (alpha-CTD).

This sequence belongs to the RNA polymerase alpha chain family. In plastids the minimal PEP RNA polymerase catalytic core is composed of four subunits: alpha, beta, beta', and beta''. When a (nuclear-encoded) sigma factor is associated with the core the holoenzyme is formed, which can initiate transcription.

It localises to the plastid. It is found in the chloroplast. The catalysed reaction is RNA(n) + a ribonucleoside 5'-triphosphate = RNA(n+1) + diphosphate. DNA-dependent RNA polymerase catalyzes the transcription of DNA into RNA using the four ribonucleoside triphosphates as substrates. The protein is DNA-directed RNA polymerase subunit alpha of Oenothera elata subsp. hookeri (Hooker's evening primrose).